Reading from the N-terminus, the 266-residue chain is Norfluorocurarine synthase 2 (266 aa).

An AB hydrolase-1 domain is found at 11–121 (HFVLVHGAGH…IMPDSTHPPI (111 aa)). Residues S86, D216, and H244 contribute to the active site.

It belongs to the AB hydrolase superfamily. As to quaternary structure, homodimer. In terms of tissue distribution, mainly expressed in roots.

It catalyses the reaction 17-dehydropreakuammicine + H2O = norfluorocurarine + methanol + CO2. It functions in the pathway alkaloid biosynthesis. Its function is as follows. Hydrolase involved in the biosynthesis of curare monoterpene indole alkaloids (MIAs), natural products such as strychnine, a neurotoxic compound used as a pesticide to control rodents, and its pharmacologically active derivatives, including brucine, used to regulate blood pressure. Curare alkaloids act as animal glycine receptor antagonists. Catalyzes the conversion of dehydropreakuammicine to norfluorocurarine. This chain is Norfluorocurarine synthase 2, found in Strychnos nux-vomica (Poison nut).